A 127-amino-acid polypeptide reads, in one-letter code: UPF0102 protein SYNAS_23220 (127 aa).

This sequence belongs to the UPF0102 family.

This chain is UPF0102 protein SYNAS_23220, found in Syntrophus aciditrophicus (strain SB).